The primary structure comprises 233 residues: Aspartate/glutamate leucyltransferase (233 aa).

The protein belongs to the R-transferase family. Bpt subfamily.

The protein localises to the cytoplasm. It carries out the reaction N-terminal L-glutamyl-[protein] + L-leucyl-tRNA(Leu) = N-terminal L-leucyl-L-glutamyl-[protein] + tRNA(Leu) + H(+). The catalysed reaction is N-terminal L-aspartyl-[protein] + L-leucyl-tRNA(Leu) = N-terminal L-leucyl-L-aspartyl-[protein] + tRNA(Leu) + H(+). Functionally, functions in the N-end rule pathway of protein degradation where it conjugates Leu from its aminoacyl-tRNA to the N-termini of proteins containing an N-terminal aspartate or glutamate. This Vibrio parahaemolyticus serotype O3:K6 (strain RIMD 2210633) protein is Aspartate/glutamate leucyltransferase.